The chain runs to 416 residues: Multifunctional CCA protein (416 aa).

2 residues coordinate ATP: glycine 8 and arginine 11. CTP is bound by residues glycine 8 and arginine 11. 2 residues coordinate Mg(2+): aspartate 21 and aspartate 23. Residues arginine 91, arginine 138, and arginine 141 each coordinate ATP. The CTP site is built by arginine 91, arginine 138, and arginine 141. The region spanning 229–331 (TGLHQELVSD…YELLQRCDAF (103 aa)) is the HD domain.

It belongs to the tRNA nucleotidyltransferase/poly(A) polymerase family. Bacterial CCA-adding enzyme type 1 subfamily. As to quaternary structure, monomer. Can also form homodimers and oligomers. It depends on Mg(2+) as a cofactor. The cofactor is Ni(2+).

It carries out the reaction a tRNA precursor + 2 CTP + ATP = a tRNA with a 3' CCA end + 3 diphosphate. The enzyme catalyses a tRNA with a 3' CCA end + 2 CTP + ATP = a tRNA with a 3' CCACCA end + 3 diphosphate. Functionally, catalyzes the addition and repair of the essential 3'-terminal CCA sequence in tRNAs without using a nucleic acid template. Adds these three nucleotides in the order of C, C, and A to the tRNA nucleotide-73, using CTP and ATP as substrates and producing inorganic pyrophosphate. tRNA 3'-terminal CCA addition is required both for tRNA processing and repair. Also involved in tRNA surveillance by mediating tandem CCA addition to generate a CCACCA at the 3' terminus of unstable tRNAs. While stable tRNAs receive only 3'-terminal CCA, unstable tRNAs are marked with CCACCA and rapidly degraded. This Xylella fastidiosa (strain 9a5c) protein is Multifunctional CCA protein.